A 215-amino-acid polypeptide reads, in one-letter code: MLQVYLVRHGETQWNAERRIQGQSDSPLTAKGEQQAMQVATRAKELGITHIISSDLGRTRRTAEIIAQACGCDILLDPRLRELNMGVLETRNIDSLTEEEENWRRQLVNGTKDGRIPQGESMLELSERMHSALASCLELPQGSRPLLVSHGIALGCLVSTILGLPAWAERRLRLRNCSISRVDYQESQWLASGWVVETAGDVSHLDAPALDELQR.

Substrate-binding positions include 8 to 15, 21 to 22, Arg58, Arg60, 82 to 85, 104 to 105, and 151 to 152; these read RHGETQWN, QG, ELNM, RR, and GI. Catalysis depends on His9, which acts as the Tele-phosphohistidine intermediate. Glu82 serves as the catalytic Proton donor/acceptor.

Belongs to the phosphoglycerate mutase family. GpmB subfamily.

The enzyme catalyses (2R)-2-phosphoglycerate = (2R)-3-phosphoglycerate. Its pathway is carbohydrate degradation; glycolysis; pyruvate from D-glyceraldehyde 3-phosphate: step 3/5. This is Probable phosphoglycerate mutase GpmB from Escherichia fergusonii (strain ATCC 35469 / DSM 13698 / CCUG 18766 / IAM 14443 / JCM 21226 / LMG 7866 / NBRC 102419 / NCTC 12128 / CDC 0568-73).